The chain runs to 405 residues: Serine/threonine-protein kinase SSN3 (405 aa).

Positions 40-350 (YEIIGYIAAG…ANDALLHPYF (311 aa)) constitute a Protein kinase domain. Residues 46–54 (IAAGTYGRV) and lysine 71 contribute to the ATP site. Aspartate 173 serves as the catalytic Proton acceptor. Positions 377–405 (DSDIKTMTYQGTKRGSQGGDNLHPRKKQK) are disordered. Residues 381–391 (KTMTYQGTKRG) show a composition bias toward polar residues.

The protein belongs to the protein kinase superfamily. CMGC Ser/Thr protein kinase family. CDC2/CDKX subfamily. As to quaternary structure, component of the srb8-11 complex, a regulatory module of the Mediator complex. Mg(2+) serves as cofactor.

Its subcellular location is the nucleus. The catalysed reaction is L-seryl-[protein] + ATP = O-phospho-L-seryl-[protein] + ADP + H(+). It catalyses the reaction L-threonyl-[protein] + ATP = O-phospho-L-threonyl-[protein] + ADP + H(+). It carries out the reaction [DNA-directed RNA polymerase] + ATP = phospho-[DNA-directed RNA polymerase] + ADP + H(+). Its function is as follows. Component of the srb8-11 complex. The srb8-11 complex is a regulatory module of the Mediator complex which is itself dependent transcription. The srb8-11 complex may be involved in the transcriptional repression of a subset of genes regulated by Mediator. It may inhibit the association of the Mediator complex with RNA polymerase II to form the holoenzyme complex. The srb8-11 complex phosphorylates the C-terminal domain (CTD) of the largest subunit of RNA polymerase II. The protein is Serine/threonine-protein kinase SSN3 (SSN3) of Yarrowia lipolytica (strain CLIB 122 / E 150) (Yeast).